We begin with the raw amino-acid sequence, 185 residues long: Ribosome-recycling factor (185 aa).

The protein belongs to the RRF family.

The protein resides in the cytoplasm. Its function is as follows. Responsible for the release of ribosomes from messenger RNA at the termination of protein biosynthesis. May increase the efficiency of translation by recycling ribosomes from one round of translation to another. The polypeptide is Ribosome-recycling factor (Neisseria meningitidis serogroup A / serotype 4A (strain DSM 15465 / Z2491)).